We begin with the raw amino-acid sequence, 88 residues long: Monensin polyketide synthase acyl carrier protein (88 aa).

In terms of domain architecture, Carrier spans 5–82 (PFTLADLQRI…ELIDHVNERL (78 aa)). An O-(pantetheine 4'-phosphoryl)serine modification is found at Ser-42.

Post-translationally, 4'-phosphopantetheine is transferred from CoA to a specific serine of the apo-ACP-like protein.

It functions in the pathway antifungal biosynthesis; monensin biosynthesis. In terms of biological role, acyl carrier protein. The protein is Monensin polyketide synthase acyl carrier protein of Streptomyces virginiae (Streptomyces cinnamonensis).